The chain runs to 689 residues: Glycine--tRNA ligase beta subunit (689 aa).

The protein belongs to the class-II aminoacyl-tRNA synthetase family. In terms of assembly, tetramer of two alpha and two beta subunits.

Its subcellular location is the cytoplasm. It carries out the reaction tRNA(Gly) + glycine + ATP = glycyl-tRNA(Gly) + AMP + diphosphate. This is Glycine--tRNA ligase beta subunit from Salmonella arizonae (strain ATCC BAA-731 / CDC346-86 / RSK2980).